The sequence spans 259 residues: Small ribosomal subunit protein eS1 (259 aa).

Basic residues predominate over residues 1 to 18; sequence MAVGKNKRISKGKKGGKK. The tract at residues 1-22 is disordered; it reads MAVGKNKRISKGKKGGKKKASD.

Belongs to the eukaryotic ribosomal protein eS1 family. In terms of assembly, component of the small ribosomal subunit. Mature ribosomes consist of a small (40S) and a large (60S) subunit. The 40S subunit contains about 33 different proteins and 1 molecule of RNA (18S). The 60S subunit contains about 49 different proteins and 3 molecules of RNA (25S, 5.8S and 5S).

It localises to the cytoplasm. The sequence is that of Small ribosomal subunit protein eS1 from Chlamydomonas reinhardtii (Chlamydomonas smithii).